A 212-amino-acid polypeptide reads, in one-letter code: Redox-sensing transcriptional repressor Rex (212 aa).

Residues 17–56 constitute a DNA-binding region (H-T-H motif); it reads KYHRYLQELMENDVDRISSKELSEKIGFTASQIRQDLNCF. 91-96 lines the NAD(+) pocket; that stretch reads GAGNIG.

This sequence belongs to the transcriptional regulatory Rex family. In terms of assembly, homodimer.

The protein resides in the cytoplasm. Modulates transcription in response to changes in cellular NADH/NAD(+) redox state. The sequence is that of Redox-sensing transcriptional repressor Rex from Clostridium perfringens (strain ATCC 13124 / DSM 756 / JCM 1290 / NCIMB 6125 / NCTC 8237 / Type A).